A 2083-amino-acid chain; its full sequence is Non-reducing polyketide synthase curS2 (2083 aa).

An N-terminal acylcarrier protein transacylase domain (SAT) region spans residues 9-246; sequence LLFGDVTDPW…NELDIHALQH (238 aa). The region spanning 366 to 798 is the Ketosynthase family 3 (KS3) domain; sequence RDGIAIVGMA…GGNACLLLED (433 aa). Catalysis depends on for beta-ketoacyl synthase activity residues cysteine 543, histidine 678, and histidine 717. Positions 895 to 1201 are malonyl-CoA:ACP transacylase (MAT) domain; that stretch reads VFVFTGQGSH…THTLQPNTHN (307 aa). The For acyl/malonyl transferase activity role is filled by serine 986. Positions 1276 to 1415 are N-terminal hotdog fold; it reads AQYLVSKSSS…DPAKTQADWD (140 aa). Residues 1276–1585 form the PKS/mFAS DH domain; it reads AQYLVSKSSS…YQELPRVTWK (310 aa). The interval 1285–1581 is product template (PT) domain; the sequence is SPKVQVVFRA…IDLRYQELPR (297 aa). The segment at 1437–1585 is C-terminal hotdog fold; that stretch reads GHRMQPEVFY…YQELPRVTWK (149 aa). In terms of domain architecture, Carrier spans 1637–1714; sequence DFDEGLVDAI…DLRRAFGANK (78 aa). Serine 1674 is subject to O-(pantetheine 4'-phosphoryl)serine. Residues 1710 to 1790 are disordered; the sequence is FGANKPKTSK…KMDETDTSPA (81 aa). Residues 1718-1736 are compositionally biased toward low complexity; it reads SKPQPGSTTPSSSQSSIPS. Residues 1745–1754 show a composition bias toward polar residues; that stretch reads MSDTASSLGS. Residues 1771–1784 are compositionally biased toward basic and acidic residues; the sequence is LEPKPNHHLGKMDE. The tract at residues 1811-2058 is thioesterase (TE) domain; sequence MMADGTGTIA…LSVAGDHLDL (248 aa). Residue histidine 2065 is the For thioesterase activity of the active site.

Its pathway is mycotoxin biosynthesis. Its function is as follows. Non-reducing polyketide synthase; part of the gene cluster that mediates the biosynthesis of 10,11-dehydrocurvularin, a prevalent fungal phytotoxin with heat shock response and immune-modulatory activities. The highly reducing polyketide synthase curS1 is responsible for biosynthesis up to the tetraketide stage. The non-reducing polyketide synthase curS2 then conducts four additional chain extension cycles, producing the unreduced part of the nascent octaketide from C-1 to C-8 in 10,11-dehydrocurvularin. In Aspergillus terreus, this protein is Non-reducing polyketide synthase curS2.